The sequence spans 354 residues: Bergaptol O-methyltransferase (354 aa).

H121 lines the bergaptol pocket. S-adenosyl-L-homocysteine-binding residues include S174, G198, D221, and K255. Residue H259 coordinates bergaptol. The Proton acceptor role is filled by H259.

It belongs to the class I-like SAM-binding methyltransferase superfamily. Cation-independent O-methyltransferase family. COMT subfamily.

The catalysed reaction is a 5-hydroxyfurocoumarin + S-adenosyl-L-methionine = a 5-methoxyfurocoumarin + S-adenosyl-L-homocysteine + H(+). It catalyses the reaction bergaptol + S-adenosyl-L-methionine = bergapten + S-adenosyl-L-homocysteine. Its activity is regulated as follows. Inhibited by Cu(2+), Ni(2+) and Co(2+). The polypeptide is Bergaptol O-methyltransferase (Ammi majus (Bishop's weed)).